The primary structure comprises 282 residues: Globin-related protein glb-13 (282 aa).

Residues 1-46 form a disordered region; the sequence is MGQENSKCPHQSLAEKRYKVERPKTKKVSSGSATERCLSTQSDEKN. The span at 13–23 shows a compositional bias: basic and acidic residues; the sequence is LAEKRYKVERP. The span at 28-41 shows a compositional bias: polar residues; it reads VSSGSATERCLSTQ. The Globin domain occupies 100 to 249; that stretch reads FLTRRERILL…IISFMRRGFD (150 aa). Heme b is bound by residues His-162 and His-194.

This sequence belongs to the globin family.

Involved in oxidative stress resistance. This chain is Globin-related protein glb-13, found in Caenorhabditis elegans.